The primary structure comprises 584 residues: Galectin-3-binding protein (584 aa).

The N-terminal stretch at 1-18 (MTPPRLFWVWLLVAGTQG) is a signal peptide. Residues 24–124 (MRLADGGATN…HERDAGVVCT (101 aa)) enclose the SRCR domain. 3 disulfide bridges follow: Cys-49/Cys-113, Cys-62/Cys-123, and Cys-93/Cys-103. A glycan (N-linked (GlcNAc...) asparagine) is linked at Asn-69. Residues Asn-125 and Asn-192 are each glycosylated (N-linked (GlcNAc...) asparagine). A BTB domain is found at 153-221 (CDLSISVNVQ…FYSRRIDITL (69 aa)). The BACK domain occupies 260–359 (PLDLYAYAVA…MLPEELFELQ (100 aa)). N-linked (GlcNAc...) asparagine glycosylation is found at Asn-361, Asn-397, Asn-550, and Asn-579.

As to quaternary structure, homodimers and homomultimers. The multimers form ring-like structures with a diameter of 30-40 nm. Binds LGALS1 and LGALS3. Binds ITGB1, COL4A1, COL5A1, COL6A1, FN1 and NID. Interacts with the gamma-tubulin ring complex (gamma-TuRC), composed of gamma-tubulin, TUBGCP2, TUBGCP3, TUBGCP4, TUBGCP5 and TUBGCP6. The unglycosylated form interacts with PDE4DIP; this interaction, which is PDE4DIP isoform-specific, may connect a pericentrosomal complex, made of AKAP9, CDK5RAP2, EB1/MAPRE1 and PDE4DIP, to the gamma-tubulin ring complex (gamma-TuRC) to promote microtubule assembly and acetylation.

The protein localises to the secreted. It localises to the extracellular space. It is found in the extracellular matrix. In terms of biological role, promotes integrin-mediated cell adhesion. May stimulate host defense against viruses and tumor cells. This Pongo abelii (Sumatran orangutan) protein is Galectin-3-binding protein (LGALS3BP).